The chain runs to 151 residues: UPF0208 membrane protein NT01EI_2692 (151 aa).

Transmembrane regions (helical) follow at residues 46–65 (FAIR…QIAL) and 69–91 (LGPA…WWLG).

It belongs to the UPF0208 family.

It localises to the cell inner membrane. In Edwardsiella ictaluri (strain 93-146), this protein is UPF0208 membrane protein NT01EI_2692.